An 87-amino-acid chain; its full sequence is HssA/B-like protein 7 (87 aa).

Polar residues predominate over residues 1 to 22 (MSILSALTSISNPMKSTKSSVA). Residues 1–23 (MSILSALTSISNPMKSTKSSVAN) are disordered.

The protein belongs to the hssA/B family.

The sequence is that of HssA/B-like protein 7 (hssl7) from Dictyostelium discoideum (Social amoeba).